The chain runs to 383 residues: 8-amino-7-oxononanoate synthase (383 aa).

Substrate is bound at residue R23. Residue 110–111 (GF) coordinates pyridoxal 5'-phosphate. Residue H135 participates in substrate binding. Residues S181, H209, and T235 each coordinate pyridoxal 5'-phosphate. K238 carries the post-translational modification N6-(pyridoxal phosphate)lysine. T351 contacts substrate.

It belongs to the class-II pyridoxal-phosphate-dependent aminotransferase family. BioF subfamily. In terms of assembly, homodimer. The cofactor is pyridoxal 5'-phosphate.

It catalyses the reaction 6-carboxyhexanoyl-[ACP] + L-alanine + H(+) = (8S)-8-amino-7-oxononanoate + holo-[ACP] + CO2. It participates in cofactor biosynthesis; biotin biosynthesis. Its function is as follows. Catalyzes the decarboxylative condensation of pimeloyl-[acyl-carrier protein] and L-alanine to produce 8-amino-7-oxononanoate (AON), [acyl-carrier protein], and carbon dioxide. In Aliivibrio fischeri (strain ATCC 700601 / ES114) (Vibrio fischeri), this protein is 8-amino-7-oxononanoate synthase.